The primary structure comprises 241 residues: Acetoacetyl-CoA reductase (241 aa).

NADP(+)-binding positions include 12-14, Arg-39, and 82-86; these read RGI and NAGIT. Substrate contacts are provided by residues Asp-88 and 141-144; that span reads QMGQ. The active-site Proton acceptor is the Tyr-147. 177 to 180 is an NADP(+) binding site; sequence PGYI. 178 to 179 lines the substrate pocket; the sequence is GY.

It belongs to the short-chain dehydrogenases/reductases (SDR) family.

The protein resides in the cytoplasm. It carries out the reaction a (3R)-3-hydroxyacyl-CoA + NADP(+) = a 3-oxoacyl-CoA + NADPH + H(+). It functions in the pathway biopolymer metabolism; poly-(R)-3-hydroxybutanoate biosynthesis. The polypeptide is Acetoacetyl-CoA reductase (Rhizobium meliloti (strain 1021) (Ensifer meliloti)).